A 29-amino-acid polypeptide reads, in one-letter code: Chassatide C10 (29 aa).

The cyclopeptide (Gly-Asn) cross-link spans G1–N29. 3 disulfides stabilise this stretch: C4/C18, C8/C20, and C13/C25.

In terms of processing, this is a cyclic peptide.

Functionally, probably participates in a plant defense mechanism. Has no activity against bacteria up to a concentration of 80 uM. Has cytotoxic but no hemolytic activity. The polypeptide is Chassatide C10 (Chassalia chartacea (Chassalia curviflora)).